The primary structure comprises 261 residues: Triosephosphate isomerase (261 aa).

Substrate is bound at residue 10–12; that stretch reads NWK. His100 acts as the Electrophile in catalysis. Glu172 functions as the Proton acceptor in the catalytic mechanism. Substrate-binding positions include Gly178, Ser218, and 239 to 240; that span reads GG.

It belongs to the triosephosphate isomerase family. Homodimer.

It localises to the cytoplasm. The catalysed reaction is D-glyceraldehyde 3-phosphate = dihydroxyacetone phosphate. Its pathway is carbohydrate biosynthesis; gluconeogenesis. It participates in carbohydrate degradation; glycolysis; D-glyceraldehyde 3-phosphate from glycerone phosphate: step 1/1. In terms of biological role, involved in the gluconeogenesis. Catalyzes stereospecifically the conversion of dihydroxyacetone phosphate (DHAP) to D-glyceraldehyde-3-phosphate (G3P). This Mycolicibacterium paratuberculosis (strain ATCC BAA-968 / K-10) (Mycobacterium paratuberculosis) protein is Triosephosphate isomerase.